An 829-amino-acid polypeptide reads, in one-letter code: Dipeptidyl peptidase family member 2 (829 aa).

The Cytoplasmic portion of the chain corresponds to 1–27 (MENDNYDVEEQGCSVFNGKHGYFARSC). A helical; Signal-anchor for type II membrane protein membrane pass occupies residues 28 to 48 (CVVFILIICVIFVFSVIFTFM). The Extracellular portion of the chain corresponds to 49–829 (QNPINLNSDN…DCFKSNLDLL (781 aa)). Residues Asn61, Asn66, Asn183, Asn209, Asn314, and Asn359 are each glycosylated (N-linked (GlcNAc...) asparagine). A disulfide bond links Cys514 and Cys533. The active-site Charge relay system is Ser691. An intrachain disulfide couples Cys711 to Cys821. An N-linked (GlcNAc...) asparagine glycan is attached at Asn754. Active-site charge relay system residues include Asp768 and His800.

Belongs to the peptidase S9B family. DPPIV subfamily.

The protein localises to the cell membrane. Removes N-terminal dipeptides sequentially from polypeptides. Essential for control of distal tip cell migration. The polypeptide is Dipeptidyl peptidase family member 2 (dpf-2) (Caenorhabditis elegans).